The following is a 150-amino-acid chain: D-aminoacyl-tRNA deacylase (150 aa).

The Gly-cisPro motif, important for rejection of L-amino acids motif lies at Gly136–Pro137.

The protein belongs to the DTD family. Homodimer.

The protein localises to the cytoplasm. The enzyme catalyses glycyl-tRNA(Ala) + H2O = tRNA(Ala) + glycine + H(+). It catalyses the reaction a D-aminoacyl-tRNA + H2O = a tRNA + a D-alpha-amino acid + H(+). An aminoacyl-tRNA editing enzyme that deacylates mischarged D-aminoacyl-tRNAs. Also deacylates mischarged glycyl-tRNA(Ala), protecting cells against glycine mischarging by AlaRS. Acts via tRNA-based rather than protein-based catalysis; rejects L-amino acids rather than detecting D-amino acids in the active site. By recycling D-aminoacyl-tRNA to D-amino acids and free tRNA molecules, this enzyme counteracts the toxicity associated with the formation of D-aminoacyl-tRNA entities in vivo and helps enforce protein L-homochirality. This chain is D-aminoacyl-tRNA deacylase, found in Staphylococcus aureus (strain Mu50 / ATCC 700699).